A 126-amino-acid chain; its full sequence is MRHQKSGRKFNRTDAHRGAMFSNMVASLFKYQLIKTTLPKAKELRRVAEPLITLAKVDSVANRRLAFARLRNKEAVGILFSNLGPRYVTRPGGYIRLLKCGFRHGDNAPMAYVEMLERPIIAEEVT.

The protein belongs to the bacterial ribosomal protein bL17 family. Part of the 50S ribosomal subunit. Contacts protein L32.

The protein is Large ribosomal subunit protein bL17 of Xylella fastidiosa (strain 9a5c).